The primary structure comprises 364 residues: Uroporphyrinogen decarboxylase (364 aa).

Substrate-binding positions include 28–32, D78, Y160, T215, and H333; that span reads RQAGR.

This sequence belongs to the uroporphyrinogen decarboxylase family. Homodimer.

It is found in the cytoplasm. It catalyses the reaction uroporphyrinogen III + 4 H(+) = coproporphyrinogen III + 4 CO2. The protein operates within porphyrin-containing compound metabolism; protoporphyrin-IX biosynthesis; coproporphyrinogen-III from 5-aminolevulinate: step 4/4. In terms of biological role, catalyzes the decarboxylation of four acetate groups of uroporphyrinogen-III to yield coproporphyrinogen-III. This Burkholderia pseudomallei (strain 1106a) protein is Uroporphyrinogen decarboxylase.